A 197-amino-acid chain; its full sequence is Recombination protein RecR (197 aa).

The C4-type zinc finger occupies 57–72 (CSVCFGITEEDPCRLC). Residues 79 to 174 (TSLCVVEEPQ…RVTRLAHGIP (96 aa)) enclose the Toprim domain.

The protein belongs to the RecR family.

Functionally, may play a role in DNA repair. It seems to be involved in an RecBC-independent recombinational process of DNA repair. It may act with RecF and RecO. The polypeptide is Recombination protein RecR (Geobacter metallireducens (strain ATCC 53774 / DSM 7210 / GS-15)).